The sequence spans 3373 residues: Intermembrane lipid transfer protein vps13A (3373 aa).

One can recognise a Chorein N-terminal domain in the interval 3-119; the sequence is FEGLVSDVLS…QAELKKKKLE (117 aa). Disordered regions lie at residues 818-858, 1028-1096, 1259-1304, 1648-1729, and 1872-1913; these read PKAT…VNSS, VPIN…KTAS, NNNK…DLEK, DPSI…EEEK, and QKKR…GKKD. The span at 823–839 shows a compositional bias: polar residues; the sequence is TPINDSNSPSSVSPKLI. Composition is skewed to low complexity over residues 840-858 and 1048-1066; these read STSP…VNSS and SSPN…QSPQ. Composition is skewed to basic and acidic residues over residues 1263-1274 and 1288-1304; these read SIEKSKSIDSKL and RSDD…DLEK. 3 stretches are compositionally biased toward low complexity: residues 1659 to 1685, 1695 to 1716, and 1884 to 1898; these read QQQQ…RSQS, SSIG…SLSS, and SSST…STNS. The span at 1899-1909 shows a compositional bias: polar residues; the sequence is FQTSTSGNSNS. The SHR-BD domain occupies 2405–2706; that stretch reads TLSFYCQYWL…CYGWDEPSAE (302 aa). The segment at 2909–2933 is disordered; the sequence is RGNNASNNNNNNGMTSSQMRQSGSG. The span at 2911 to 2920 shows a compositional bias: low complexity; sequence NNASNNNNNN.

Belongs to the VPS13 family.

It is found in the membrane. Functionally, mediates the transfer of lipids between membranes at organelle contact sites. The sequence is that of Intermembrane lipid transfer protein vps13A (vps13A) from Dictyostelium discoideum (Social amoeba).